The primary structure comprises 295 residues: Acetyl-coenzyme A carboxylase carboxyl transferase subunit beta (295 aa).

Residues 1–20 (MSWLSKLMPSGIRTENTPAK) are disordered. The 268-residue stretch at 28–295 (LWEKCSNCGS…QPHPQDADAA (268 aa)) folds into the CoA carboxyltransferase N-terminal domain. Zn(2+)-binding residues include C32, C35, C51, and C54. A C4-type zinc finger spans residues 32 to 54 (CSNCGSALYGPELEENLEVCPKC).

The protein belongs to the AccD/PCCB family. As to quaternary structure, acetyl-CoA carboxylase is a heterohexamer composed of biotin carboxyl carrier protein (AccB), biotin carboxylase (AccC) and two subunits each of ACCase subunit alpha (AccA) and ACCase subunit beta (AccD). It depends on Zn(2+) as a cofactor.

Its subcellular location is the cytoplasm. It catalyses the reaction N(6)-carboxybiotinyl-L-lysyl-[protein] + acetyl-CoA = N(6)-biotinyl-L-lysyl-[protein] + malonyl-CoA. It functions in the pathway lipid metabolism; malonyl-CoA biosynthesis; malonyl-CoA from acetyl-CoA: step 1/1. Functionally, component of the acetyl coenzyme A carboxylase (ACC) complex. Biotin carboxylase (BC) catalyzes the carboxylation of biotin on its carrier protein (BCCP) and then the CO(2) group is transferred by the transcarboxylase to acetyl-CoA to form malonyl-CoA. The protein is Acetyl-coenzyme A carboxylase carboxyl transferase subunit beta of Xanthomonas campestris pv. campestris (strain B100).